Here is a 132-residue protein sequence, read N- to C-terminus: Small ribosomal subunit protein uS8 (132 aa).

Belongs to the universal ribosomal protein uS8 family. Part of the 30S ribosomal subunit. Contacts proteins S5 and S12.

In terms of biological role, one of the primary rRNA binding proteins, it binds directly to 16S rRNA central domain where it helps coordinate assembly of the platform of the 30S subunit. This is Small ribosomal subunit protein uS8 from Anaeromyxobacter sp. (strain Fw109-5).